Here is a 415-residue protein sequence, read N- to C-terminus: Phosphoglycerate kinase (415 aa).

Residues Val23, Asp24, Phe25, Asn26, Gln39, Arg40, Ser63, His64, Gly66, Arg67, Leu122, Arg123, and Arg170 each coordinate (2R)-3-phosphoglycerate. Gly213 contributes to the ADP binding site. Gly213 is a CDP binding site. AMP-binding residues include Ala214 and Lys215. Ala214 is an ATP binding site. Residue Ala214 coordinates Mg(2+). A CDP-binding site is contributed by Asp218. Asp218 is a Mg(2+) binding site. Lys219 serves as a coordination point for AMP. Lys219 contacts ATP. Gly237 is an ADP binding site. Gly237 is a CDP binding site. AMP contacts are provided by Gly238 and Gly311. The ATP site is built by Gly238 and Gly311. CDP is bound by residues Gly336 and Phe341. Phe341 serves as a coordination point for ADP. Position 342 (Glu342) interacts with AMP. Residues Glu342, Asp373, and Thr374 each coordinate ATP. Asp373 lines the Mg(2+) pocket.

The protein belongs to the phosphoglycerate kinase family. In terms of assembly, monomer. Mg(2+) serves as cofactor.

The protein localises to the cytoplasm. It is found in the mitochondrion. It catalyses the reaction (2R)-3-phosphoglycerate + ATP = (2R)-3-phospho-glyceroyl phosphate + ADP. It participates in carbohydrate degradation; glycolysis; pyruvate from D-glyceraldehyde 3-phosphate: step 2/5. Its function is as follows. Catalyzes one of the two ATP producing reactions in the glycolytic pathway via the reversible conversion of 1,3-diphosphoglycerate to 3-phosphoglycerate. Both L- and D- forms of purine and pyrimidine nucleotides can be used as substrates, but the activity is much lower on pyrimidines. Negatively regulates the biosynthesis of acetyl-CoA from pyruvate in the mitochondrion. This Penicillium chrysogenum (Penicillium notatum) protein is Phosphoglycerate kinase (PGKA).